The primary structure comprises 416 residues: ABSCISIC ACID-INSENSITIVE 5-like protein 5 (416 aa).

Residues 1-23 (MDGSMNLGNEPPGDGGGGGGLTR) form a disordered region. Residues 13 to 22 (GDGGGGGGLT) are compositionally biased toward gly residues. Residues Ser-26, Ser-45, and Ser-86 each carry the phosphoserine modification. A Phosphothreonine modification is found at Thr-135. The tract at residues 300-326 (SEGIGKSNGDSSSLSPSPYMFNGGVRG) is disordered. In terms of domain architecture, bZIP spans 336-399 (VERRQRRMIK…KNQETEMRNL (64 aa)). The segment at 338–357 (RRQRRMIKNRESAARSRARK) is basic motif. A leucine-zipper region spans residues 364-385 (LEAEVAKLKEENDELQRKQARI). The interval 388–416 (MQKNQETEMRNLLQGGPKKKLRRTESGPW) is disordered.

This sequence belongs to the bZIP family. ABI5 subfamily. DNA-binding heterodimer. Interacts with ARIA. The activation by phosphorylation is induced by abscisic acid (ABA). Phosphorylated by SRK2C, SRK2D, SRK2E, SRK2F and SRK2I in vitro. In terms of tissue distribution, expressed in roots, leaves, flowers and siliques but not in seeds.

It localises to the nucleus. In terms of biological role, involved in ABA and stress responses and acts as a positive component of glucose signal transduction. Functions as a transcriptional activator in the ABA-inducible expression of rd29B. Binds specifically to the ABA-responsive element (ABRE) of the rd29B gene promoter. The chain is ABSCISIC ACID-INSENSITIVE 5-like protein 5 (ABF2) from Arabidopsis thaliana (Mouse-ear cress).